The chain runs to 274 residues: Glutamate racemase (274 aa).

Residues 9–10 (DS) and 41–42 (YG) each bind substrate. Residue Cys-73 is the Proton donor/acceptor of the active site. Substrate is bound at residue 74–75 (NT). The active-site Proton donor/acceptor is the Cys-183. Position 184-185 (184-185 (TH)) interacts with substrate.

Belongs to the aspartate/glutamate racemases family.

The enzyme catalyses L-glutamate = D-glutamate. The protein operates within cell wall biogenesis; peptidoglycan biosynthesis. In terms of biological role, provides the (R)-glutamate required for cell wall biosynthesis. The sequence is that of Glutamate racemase from Shewanella baltica (strain OS195).